The sequence spans 115 residues: MTTSFYFLLMALGLLLYVCQSSFGNQHTRNSDTPKYRCGSEIPNSYIDLCFRKRNDAGKKRGRASPLWQRGGSLSMLKARAKRNEAFHLQRAHRGVVEHCCHRPCSNAEFKKFCG.

The first 24 residues, 1 to 24, serve as a signal peptide directing secretion; it reads MTTSFYFLLMALGLLLYVCQSSFG. Residues 25–29 constitute a propeptide that is removed on maturation; that stretch reads NQHTR. A 4-hydroxyproline; partial modification is found at proline 34. Disulfide bonds link cysteine 38-cysteine 101, cysteine 50-cysteine 114, and cysteine 100-cysteine 105. 4-carboxyglutamate is present on glutamate 41. A propeptide spans 53-94 (c peptide); sequence KRNDAGKKRGRASPLWQRGGSLSMLKARAKRNEAFHLQRAHR. The residue at position 98 (glutamate 98) is a 4-carboxyglutamate. Proline 104 carries the 4-hydroxyproline; partial modification. 4-carboxyglutamate; partial is present on glutamate 109. Cysteine 114 carries the post-translational modification Cysteine amide.

Belongs to the insulin family. As to quaternary structure, heterodimer of A and B chains; disulfide-linked. Expressed by the venom gland.

It localises to the secreted. This venom insulin, from a fish-hunting cone snail, facilitates prey capture by rapidly inducing hypoglycemic shock. It is one of the smallest known insulin found in nature and lacks the C-terminal segment of the B chain that, in human insulin, mediates engagement of the insulin receptor (INSR) and assembly of the hormone's hexameric storage form. Despite lacking this segment, it both binds and activates human insulin receptor (long isoform (HIR-B)) with a high potency (EC(50)=12.0 nM). In vivo, intraperitoneal injection of this peptide into zebrafish lowers blood glucose with a lower potency than human insulin. In addition, when applied to water, this peptide reduces overall locomotor activity of zebrafish larvae, observed as a significant decrease in the percentage of time spent swimming and movement frequency. When tested on a mouse model of diabetes, this insulin also lowers blood glucose with a 10-fold lower potency than human insulin. In Conus tulipa (Fish-hunting cone snail), this protein is Con-Ins T1A.